Consider the following 348-residue polypeptide: GTPase Obg (348 aa).

One can recognise an Obg domain in the interval Met1–Ile159. An OBG-type G domain is found at Ala160–Asp327. GTP contacts are provided by residues Gly166–Ser173, Phe191–His195, Asp212–Gly215, Ser279–Asp282, and Ser308–Ala310. The Mg(2+) site is built by Ser173 and Thr193.

This sequence belongs to the TRAFAC class OBG-HflX-like GTPase superfamily. OBG GTPase family. Monomer. It depends on Mg(2+) as a cofactor.

Its subcellular location is the cytoplasm. An essential GTPase which binds GTP, GDP and possibly (p)ppGpp with moderate affinity, with high nucleotide exchange rates and a fairly low GTP hydrolysis rate. Plays a role in control of the cell cycle, stress response, ribosome biogenesis and in those bacteria that undergo differentiation, in morphogenesis control. The chain is GTPase Obg from Beijerinckia indica subsp. indica (strain ATCC 9039 / DSM 1715 / NCIMB 8712).